The primary structure comprises 184 residues: Putative rRNA methyltransferase YlbH (184 aa).

The tract at residues 1 to 22 (MRVISGSKKGRSLKAVAGTSTR) is disordered.

It belongs to the methyltransferase superfamily. RsmD family.

Its function is as follows. May catalyze the S-adenosyl-L-methionine-dependent methylation of a specific base in rRNA. The polypeptide is Putative rRNA methyltransferase YlbH (ylbH) (Bacillus subtilis (strain 168)).